Consider the following 110-residue polypeptide: Transcription factor S (110 aa).

Zn(2+) is bound by residues Cys4, Cys7, Cys22, Cys25, Cys71, Cys74, Cys99, and Cys102. The TFIIS-type zinc-finger motif lies at 67–107; that stretch reads TKVTCPKCGNDTAYWWEMQTRAGDEPSTIFYKCTKCGYTWR.

This sequence belongs to the archaeal rpoM/eukaryotic RPA12/RPB9/RPC11 RNA polymerase family.

The protein localises to the chromosome. Functionally, involved in transcriptional proofreading and fidelity. Induces RNA cleavage activity in RNA polymerase (RNAP). Stimulates transcription elongation by RNAP on both naked DNA and histone-bound DNA (chromatin), facilitating transcription through the histone barrier. Stimulation depends on transcript cleavage. In the presence of TFS, the cleavage activity of RNAP truncates RNA back to position +15 in a stepwise manner by releasing mainly dinucleotides from the 3'-end of the nascent RNA. The truncated RNAs are able to continue elongation. Misincorporation of nucleotides during elongation of transcription leads to arrested elongation complexes which are rescued by TFS-promoted removal of a dinucleotide from the 3'-end. TFS is able to induce a cleavage resynthesis cycle in stalled elongation complexes (resulting from the next missing nucleotide or a reduced incorporation rate of a wrong nucleotide) preventing misincorporation and enabling proofreading in a post-incorporation manner. Pausing of elongation complexes is the main determinant of TFS-induced RNA cleavage. The protein is Transcription factor S of Thermococcus kodakarensis (strain ATCC BAA-918 / JCM 12380 / KOD1) (Pyrococcus kodakaraensis (strain KOD1)).